The following is a 481-amino-acid chain: MFHVPLLIGGKPCSASDERTFERRSPLTGEVVSRVAAASLEDADAAVAAAQAAFPEWAALAPSERRARLLRAADLLEDRSSEFTAAASETGAAGNWYGFNVYLAAGMLREAAAMTTQIQGDVIPSNVPGSFAMAVRQPCGVVLGIAPWNAPVILGVRAVAMPLACGNTVVLKSSELSPFTHRLIGQVLHDAGLGDGVVNVISNAPQDAPAVVERLIANPAVRRVNFTGSTHVGRIIGELSARHLKPAVLELGGKAPFLVLDDADLDAAVEAAAFGAYFNQGQICMSTERLIVTAVADAFVEKLARKVATLRAGDPNDPQSVLGSLIDANAGQRIQVLVDDALAKGARQVVGGGLDGSIMQPMLLDQVTEEMRLYREESFGPVAVVLRGDGDEELLRLANDSEFGLSAAIFSRDVSRAMELAQRVDSGICHINGPTVHDEAQMPFGGVKSSGYGSFGSRASIEHFTQLRWLTIQNGPRHYPI.

An NAD(+)-binding site is contributed by 228 to 233 (GSTHVG). Active-site residues include Glu-250 and Cys-284.

The protein belongs to the aldehyde dehydrogenase family.

It carries out the reaction vanillin + NAD(+) + H2O = vanillate + NADH + 2 H(+). Functionally, catalyzes the NAD-dependent oxidation of vanillin to vanillic acid. The protein is Vanillin dehydrogenase (vdh) of Pseudomonas sp. (strain HR199 / DSM 7063).